A 182-amino-acid chain; its full sequence is Plasmolipin (182 aa).

The Cytoplasmic segment spans residues 1–35; it reads MAEFPSKVSTRTSSPAQGAEASVSALRPDLGFVRS. The residue at position 9 (S9) is a Phosphoserine. Residues 32-166 enclose the MARVEL domain; that stretch reads FVRSRLGALM…SAFFSYQAWR (135 aa). Residues 36 to 56 form a helical membrane-spanning segment; the sequence is RLGALMLLQLVLGLLVWALIA. The Extracellular portion of the chain corresponds to 57-68; it reads DTPYHLYPAYGW. The helical transmembrane segment at 69–89 threads the bilayer; that stretch reads VMFVAVFLWLVTIVLFNLYLF. Over 90–99 the chain is Cytoplasmic; the sequence is QLHMKLYMVP. A helical membrane pass occupies residues 100–120; sequence WPLVLMIFNISATVLYITAFI. The Extracellular portion of the chain corresponds to 121 to 141; it reads ACSAAVDLTSLRGTRPYNQRA. A helical transmembrane segment spans residues 142-162; the sequence is AASFFACLVMIAYGVSAFFSY. Residues 163–182 lie on the Cytoplasmic side of the membrane; that stretch reads QAWRGVGSNAATSQMAGGYA.

It belongs to the MAL family. Forms oligomers. Post-translationally, phosphorylated.

It localises to the cell membrane. Its subcellular location is the myelin membrane. It is found in the apical cell membrane. The protein resides in the golgi apparatus. Its function is as follows. Main component of the myelin sheath that plays an important role in myelin membrane biogenesis and myelination. Plays an essential function in apical endocytosis. Regulates epithelial development through the regulation of apical endocytosis. Part of the intracellular machinery that mediates basolateral-to-apical transport of ICAM-1, an essential adhesion receptor in epithelial cells, from the subapical compartment in hepatic epithelial cells. The protein is Plasmolipin of Homo sapiens (Human).